Consider the following 416-residue polypeptide: Exodeoxyribonuclease 7 large subunit (416 aa).

Belongs to the XseA family. In terms of assembly, heterooligomer composed of large and small subunits.

Its subcellular location is the cytoplasm. The enzyme catalyses Exonucleolytic cleavage in either 5'- to 3'- or 3'- to 5'-direction to yield nucleoside 5'-phosphates.. Its function is as follows. Bidirectionally degrades single-stranded DNA into large acid-insoluble oligonucleotides, which are then degraded further into small acid-soluble oligonucleotides. In Sulfurimonas denitrificans (strain ATCC 33889 / DSM 1251) (Thiomicrospira denitrificans (strain ATCC 33889 / DSM 1251)), this protein is Exodeoxyribonuclease 7 large subunit.